The sequence spans 185 residues: MNWRSEHVWVELLKGSRKRGNFFWACILFLGSLGFLSVGASSYLGKNIISILPSQQILFFPQGVVMSFYGIAGLFISSYLWCTILWNVGSGYDRFDRKEGIVCIFRWGFPGIKRRVFLQFLMRDIQSIRIQVKEGLYPRRILYMEIRGQGVIPLTRTDEKFFTPREIEQKAAELAYFLRVPIEVF.

The next 2 membrane-spanning stretches (helical) occupy residues 20–40 (GNFF…SVGA) and 57–77 (ILFF…LFIS).

The protein belongs to the Ycf4 family.

Its subcellular location is the plastid. The protein resides in the chloroplast thylakoid membrane. Functionally, seems to be required for the assembly of the photosystem I complex. The chain is Photosystem I assembly protein Ycf4 from Agrostis stolonifera (Creeping bentgrass).